A 1239-amino-acid chain; its full sequence is Anillin (1239 aa).

Disordered stretches follow at residues 32 to 67, 230 to 265, 493 to 621, and 684 to 716; these read CSVPSSSATSASGGDAGVLAPRSRSPGGQSAASGGG, EAPPPKPHLSSRRAEKGPAPLPPKKDEVDEASRTKQ, FDNQ…MCNG, and GSTQDDQSDSGDEQNASRLSLGSKGTTASNSFS. Low complexity predominate over residues 53–63; sequence RSRSPGGQSAA. The interval 126-371 is interaction with and bundling of F-actin; it reads EQAEGGALNP…ENKGTGGQSQ (246 aa). Residues 252 to 265 show a composition bias toward basic and acidic residues; the sequence is PKKDEVDEASRTKQ. Residues 500-518 show a composition bias toward low complexity; sequence SSVAAQARPPAPAPSRVVR. Over residues 519–528 the composition is skewed to pro residues; the sequence is PMPPPPPPPI. A compositionally biased stretch (basic and acidic residues) spans 551-563; it reads EDSKRARKSHSDR. Acidic residues predominate over residues 594 to 610; the sequence is DEEETESCMDESDDQSQ. The span at 699–716 shows a compositional bias: polar residues; sequence ASRLSLGSKGTTASNSFS. A Phosphoserine modification is found at Ser-712. Thr-740 carries the post-translational modification Phosphothreonine. Residues Ser-744 and Ser-754 each carry the phosphoserine modification. A Phosphothreonine modification is found at Thr-831. The stretch at 834–861 forms a coiled coil; it reads DDEEMQNAREVNDASQAQDKIKKLLSEV. The region spanning 1106-1230 is the PH domain; it reads SVEYKGFLTM…WCAYLNKALT (125 aa).

In terms of assembly, interacts with and bundles F-actin. As to expression, accumulates in the ring canals that interconnect cells of the germline cysts in males and the ovarian follicles in females. These structures develop from arrested contractile rings after a specialized cytokinesis in which the closing of the invaginating plasma membrane is incomplete. Also concentrates in the arrested cleavage furrows that initially link the oocyte to its 15 nurse cells in the early egg chamber and is subsequently lost from these furrows as germline cell division is completed.

The protein localises to the nucleus. It is found in the cytoplasm. The protein resides in the cytoskeleton. Its subcellular location is the cell cortex. It localises to the cell projection. The protein localises to the cilium. It is found in the flagellum. In terms of biological role, required for cytokinesis. Essential for the structural integrity of the cleavage furrow and for completion of cleavage furrow ingression and proper formation of the midbody. Required during cellularization of syncytial embryos for the proper formation and function of the furrow canals, the stable inward folds of the plasma membrane which separate the peripheral nuclei. Also required for the formation of the pole cells, the progenitors of the adult germline which are formed by cytokinesis of the cytoplasmic buds at the posterior pole of the syncytial embryo. Essential for embryonic viability. In Drosophila melanogaster (Fruit fly), this protein is Anillin (scra).